The following is a 258-amino-acid chain: MLILISPAKTLDYQSPLTTTRYTLPELLDNSQQLIHEARKLTPPQISTLMRISDKLAGINAARFHDWQPDFTPENARQAILAFKGDVYTGLQAETFSEDDFDFAQQHLRMLSGLYGVLRPLDLMQPYRLEMGIRLENARGKDLYQFWGDIITNKLNEALAAQGDNVVINLASDEYFKSVKPKKLNAEIIKPVFLDEKNGKFKIISFYAKKARGLMSRFIIENRLTKPEQLTGFNSEGYFFDEDSSSNGELVFKRYEQR.

It belongs to the UPF0246 family.

This chain is UPF0246 protein YaaA, found in Escherichia coli (strain 55989 / EAEC).